We begin with the raw amino-acid sequence, 169 residues long: MFTSAHANRSAQASAPAGHYAHRSGEQNTNGLISEIVYREDQPMMTQLLLLPLLQQLGQQSRWQLWLTPQQKLSREWVQSAGLPLSKVMQISQLSPSHTIDSMIRALRTGNYSVVICWLAEELTADEHERLVNAAQVGSAMGFIMRPVRNQGTLGRQLSGLKIHSNLYH.

Over residues 1 to 13 (MFTSAHANRSAQA) the composition is skewed to polar residues. Positions 1-26 (MFTSAHANRSAQASAPAGHYAHRSGE) are disordered. Residues 106 to 112 (ALRTGNY) are ftsZ binding. The lon protease binding stretch occupies residues 162-169 (KIHSNLYH).

It belongs to the SulA family. Interacts with FtsZ. Post-translationally, is rapidly cleaved and degraded by the Lon protease once DNA damage is repaired.

Component of the SOS system and an inhibitor of cell division. Accumulation of SulA causes rapid cessation of cell division and the appearance of long, non-septate filaments. In the presence of GTP, binds a polymerization-competent form of FtsZ in a 1:1 ratio, thus inhibiting FtsZ polymerization and therefore preventing it from participating in the assembly of the Z ring. This mechanism prevents the premature segregation of damaged DNA to daughter cells during cell division. The polypeptide is Cell division inhibitor SulA (Klebsiella pneumoniae subsp. pneumoniae (strain ATCC 700721 / MGH 78578)).